A 605-amino-acid chain; its full sequence is Kelch-like protein 26 (605 aa).

Residues 53–120 (LDVVLAIDNE…AYSSEVTLDL (68 aa)) form the BTB domain. In terms of domain architecture, BACK spans 155–256 (CLNIGQMATT…RSSELVDSVQ (102 aa)). Kelch repeat units follow at residues 300–351 (SLIT…VLDN), 352–403 (FVYV…VLDG), 404–450 (QLYA…TCGD), 452–498 (LYIS…SANN), 499–549 (RIYA…LLDK), and 551–598 (IYIV…PIIL).

In terms of biological role, may play a role in endo(sarco)plasmic reticulum (ER/SR) mitochondrial signaling. May be part of the ubiquitin-proteasome system (UPS) and affect ubiquitination and degradation of target substrates. In Danio rerio (Zebrafish), this protein is Kelch-like protein 26 (klhl26).